We begin with the raw amino-acid sequence, 294 residues long: MEIEGYEKIIEAGKIASKVREEAVKLIXPGVKLLEVAEFVENRIRELGGEPAFPCNISINEIAAHYTPKLNDNLEFKDDDVVKLDLGAHVDGYIADTAITVDLSNSYKDLVKASEDALYTVIKEINPPMNIGEMGKIIQEVIESYGYKPISNLSGHVMHRYELHTGISIPNVYERTNQYIDVGDLVAIEPFATDGFGMVKDGNLGNIYKFLAKRPIRLPQARKLLDVISKNYPYLPFAERWVLKNESERLALNSLIRASCIYGYPILKERENGIVGQAEHTILITENGVEITTK.

Substrate is bound at residue His65. The a divalent metal cation site is built by Asp85, Asp96, and His156. His164 provides a ligand contact to substrate. 2 residues coordinate a divalent metal cation: Glu189 and Glu279.

This sequence belongs to the peptidase M24A family. Methionine aminopeptidase archaeal type 2 subfamily. As to quaternary structure, monomer. Co(2+) is required as a cofactor. The cofactor is Zn(2+). Mn(2+) serves as cofactor. Requires Fe(2+) as cofactor.

The enzyme catalyses Release of N-terminal amino acids, preferentially methionine, from peptides and arylamides.. Removes the N-terminal methionine from nascent proteins. The N-terminal methionine is often cleaved when the second residue in the primary sequence is small and uncharged (Met-Ala-, Cys, Gly, Pro, Ser, Thr, or Val). This chain is Methionine aminopeptidase, found in Methanocaldococcus jannaschii (strain ATCC 43067 / DSM 2661 / JAL-1 / JCM 10045 / NBRC 100440) (Methanococcus jannaschii).